We begin with the raw amino-acid sequence, 250 residues long: MELGHVLSEGKTKIVYAHPTDPDLAILFHKDGITAGDGARRHVIAGKGALAGQTTANVFRFLNRAGIATHFIEAPEPKLTVVRRCVMIPLEVVMRRLPAGSYLRRYPEAAGQRFDPPLVEFFLKDDARHDPQITPDEIVAQGIATPAEVEQMTMTGQQVFTTLEAAWAKLDVTLVDLKIEFGRAGDGSLLVADVIDNDSWRIWPGGDPNRMLDKQVYRNAQVVDEDVLADVYARYAQVAELTGRWDAVTK.

The protein belongs to the SAICAR synthetase family.

It carries out the reaction 5-amino-1-(5-phospho-D-ribosyl)imidazole-4-carboxylate + L-aspartate + ATP = (2S)-2-[5-amino-1-(5-phospho-beta-D-ribosyl)imidazole-4-carboxamido]succinate + ADP + phosphate + 2 H(+). It functions in the pathway purine metabolism; IMP biosynthesis via de novo pathway; 5-amino-1-(5-phospho-D-ribosyl)imidazole-4-carboxamide from 5-amino-1-(5-phospho-D-ribosyl)imidazole-4-carboxylate: step 1/2. The sequence is that of Phosphoribosylaminoimidazole-succinocarboxamide synthase from Chloroflexus aggregans (strain MD-66 / DSM 9485).